Consider the following 246-residue polypeptide: UDP-N-acetyl-D-mannosaminuronic acid transferase (246 aa).

Belongs to the glycosyltransferase 26 family.

It carries out the reaction UDP-N-acetyl-alpha-D-mannosaminouronate + N-acetyl-alpha-D-glucosaminyl-di-trans,octa-cis-undecaprenyl diphosphate = beta-D-ManNAcA-(1-&gt;4)-alpha-D-GlcNAc-di-trans,octa-cis-undecaprenyl diphosphate + UDP + H(+). Its pathway is bacterial outer membrane biogenesis; enterobacterial common antigen biosynthesis. Catalyzes the synthesis of Und-PP-GlcNAc-ManNAcA (Lipid II), the second lipid-linked intermediate involved in enterobacterial common antigen (ECA) synthesis. This is UDP-N-acetyl-D-mannosaminuronic acid transferase from Escherichia coli (strain ATCC 8739 / DSM 1576 / NBRC 3972 / NCIMB 8545 / WDCM 00012 / Crooks).